Consider the following 282-residue polypeptide: tRNA (guanine-N(7)-)-methyltransferase (282 aa).

Positions 1-31 are disordered; it reads MSLTDDQASKRQAYRAAKEANRKELKHVKID. Basic and acidic residues predominate over residues 16-31; that stretch reads AAKEANRKELKHVKID. Residues G99, 122–123, 157–158, and C177 contribute to the S-adenosyl-L-methionine site; these read EI and NA. Residue D180 is part of the active site. 255–257 is an S-adenosyl-L-methionine binding site; sequence TEE.

This sequence belongs to the class I-like SAM-binding methyltransferase superfamily. TrmB family. In terms of assembly, forms a complex with TRM82.

The protein localises to the nucleus. It carries out the reaction guanosine(46) in tRNA + S-adenosyl-L-methionine = N(7)-methylguanosine(46) in tRNA + S-adenosyl-L-homocysteine. It functions in the pathway tRNA modification; N(7)-methylguanine-tRNA biosynthesis. In terms of biological role, catalyzes the formation of N(7)-methylguanine at position 46 (m7G46) in tRNA. This Eremothecium gossypii (strain ATCC 10895 / CBS 109.51 / FGSC 9923 / NRRL Y-1056) (Yeast) protein is tRNA (guanine-N(7)-)-methyltransferase.